Here is an 804-residue protein sequence, read N- to C-terminus: MSKHQTQVVGDFTIGPEIGRGSFANVYKGYDNRTKAPVAVKSVFRSRLKNQKLVENLEIEISILKNLKNPHIVALLDCVKTDQYFHLFMEYCSLGDLSYFIRRRDQLVQTHPLISSILERYPSPPNSHGLNKVLVVNFLKQLASALEFLRDQNLVHRDIKPQNLLLSPPVHSKEEFKRKGYSGLWELPVLKIADFGFARFLPSTSMAETLCGSPLYMAPEILRYEKYNAKADLWSVGAVIYEMSVGKPPFRASNHVELLRKIEKSKDEITFPVSAEVPDDLVRLICGLLKANPTERMGFQEFFNDPLIVYDVQCADEPLECSNVDEQLFISEYLPNLKTSPPAKPAPETIKEESEEEERAERAPTDSLLIGKEADLRIPRPMEGSGKDEVIKKLINKSSPPPDTVKDGQIKKGARRDKDDFVYEKDYVVVEKRTVEVNAIADELAKAGAGAVAIPSPHLGTNEHSAANPSGPTETQTQRRFSPSSRTSSIGSNRRPSWGDRKMPISISPTNALTKALGYTSNRLFGQQQQQPQQAQQAAIESAITNVTTNLLATKTLRPLKPSQETSLEDTEVINQLELLATMAHAISLFAEVKFSQLIPLPPSSSSPGSADYDEMYQNDAFPPQMVKSISSEGVALYVETLSLLAKAMSIASDWWHQNSSKPSTSPKLNDLVQWIRSRFNESLEKAEFLRLRLADANEQLVGESGSSLNKPVVAEKLIFDRALEMSRTAAMNELKNEDLLGCELSYSTAIWMLEALLSNDEEPVTGNEKLDAEDKKIIELFINSIGNRLKVLRQKIDKQGVRS.

One can recognise a Protein kinase domain in the interval 12 to 308; sequence FTIGPEIGRG…FQEFFNDPLI (297 aa). Residues 18-26 and lysine 41 contribute to the ATP site; that span reads IGRGSFANV. Aspartate 158 serves as the catalytic Proton acceptor. Disordered stretches follow at residues 339–364, 395–415, and 455–506; these read TSPP…ERAP, INKS…KGAR, and PSPH…MPIS. Residues 404–415 are compositionally biased toward basic and acidic residues; sequence TVKDGQIKKGAR. Residues 462-495 are compositionally biased toward polar residues; sequence NEHSAANPSGPTETQTQRRFSPSSRTSSIGSNRR.

It belongs to the protein kinase superfamily. Ser/Thr protein kinase family. APG1/unc-51/ULK1 subfamily. Homodimer. Forms a ternary complex with ATG13 and ATG17.

It is found in the cytoplasm. The protein localises to the preautophagosomal structure membrane. The catalysed reaction is L-seryl-[protein] + ATP = O-phospho-L-seryl-[protein] + ADP + H(+). It carries out the reaction L-threonyl-[protein] + ATP = O-phospho-L-threonyl-[protein] + ADP + H(+). Serine/threonine protein kinase involved in the cytoplasm to vacuole transport (Cvt) and found to be essential in autophagy, where it is required for the formation of autophagosomes. Involved in the clearance of protein aggregates which cannot be efficiently cleared by the proteasome. Required for selective autophagic degradation of the nucleus (nucleophagy) as well as for mitophagy which contributes to regulate mitochondrial quantity and quality by eliminating the mitochondria to a basal level to fulfill cellular energy requirements and preventing excess ROS production. Also involved in endoplasmic reticulum-specific autophagic process, in selective removal of ER-associated degradation (ERAD) substrates. Plays a key role in ATG9 and ATG23 cycling through the pre-autophagosomal structure and is necessary to promote ATG18 binding to ATG9 through phosphorylation of ATG9. Catalyzes phosphorylation of ATG4, decreasing the interaction between ATG4 and ATG8 and impairing deconjugation of PE-conjugated forms of ATG8. The polypeptide is Serine/threonine-protein kinase ATG1 (Pichia angusta (Yeast)).